Consider the following 616-residue polypeptide: Glycogenin-1 (616 aa).

Residues Leu10, Tyr16, and Arg95 each coordinate UDP. Residues Leu10, Tyr16, Arg95, Lys104, Asp120, Asp122, Asn158, Ser159, Asp185, Asp188, and Gln189 each contribute to the UDP-alpha-D-glucose site. Residues Asp120 and Asp122 each coordinate UDP. Positions 120 and 122 each coordinate Mn(2+). Tyr230 carries an O-linked (Glc...) tyrosine glycan. UDP is bound by residues His247, Gly250, and Lys253. Mn(2+) is bound at residue His247. UDP-alpha-D-glucose contacts are provided by Gly250 and Lys253. Residues 283–302 show a composition bias toward basic and acidic residues; that stretch reads HQLNNEVSKPKISDSDKTET. Disordered regions lie at residues 283-320, 335-354, 371-525, and 553-588; these read HQLN…PTTN, NQNA…NPVP, TNQP…EKDK, and RDAT…EMPN. A compositionally biased stretch (basic and acidic residues) spans 377 to 386; sequence ESREYSKEND. The segment covering 400 to 419 has biased composition (polar residues); the sequence is SPPNSTQELNSSYSVVSTQA. A compositionally biased stretch (low complexity) spans 450–461; it reads STAASSNNNVSN. 2 stretches are compositionally biased toward polar residues: residues 462 to 485 and 492 to 503; these read QPDG…PSNP and DNIQKPSVSTND. The segment covering 567–576 has biased composition (basic and acidic residues); it reads DKQEDMKLTA. Positions 577-586 are enriched in polar residues; the sequence is EETNQPQQEM. Tyr598 carries an O-linked (Glc...) tyrosine glycan.

Belongs to the glycosyltransferase 8 family. Glycogenin subfamily. The cofactor is Mn(2+).

The protein localises to the cytoplasm. The protein resides in the vacuole. The catalysed reaction is L-tyrosyl-[glycogenin] + UDP-alpha-D-glucose = alpha-D-glucosyl-L-tyrosyl-[glycogenin] + UDP + H(+). The enzyme catalyses [1,4-alpha-D-glucosyl](n)-L-tyrosyl-[glycogenin] + UDP-alpha-D-glucose = [1,4-alpha-D-glucosyl](n+1)-L-tyrosyl-[glycogenin] + UDP + H(+). In terms of biological role, self-glucosylating initiator of glycogen synthesis. It catalyzes the formation of a short alpha (1,4)-glucosyl chain covalently attached via a glucose 1-O-tyrosyl linkage to internal tyrosine residues and these chains act as primers for the elongation reaction catalyzed by glycogen synthase. Capable of transferring glucosyl residues to unbound acceptors such as free oligoglucans or oligoglucan derivatives. This is Glycogenin-1 from Saccharomyces cerevisiae (strain ATCC 204508 / S288c) (Baker's yeast).